Here is a 1899-residue protein sequence, read N- to C-terminus: Protocadherin-15 (1899 aa).

The N-terminal stretch at 1-26 (MLQQFCLWKWLAVGIAVATILASSLA) is a signal peptide. At 27–1376 (QNDEDCKLAR…AQAVGYTEGA (1350 aa)) the chain is on the extracellular side. Cys-32 and Cys-120 are disulfide-bonded. Cadherin domains follow at residues 38 to 147 (GPPA…SPQF), 148 to 265 (QQQR…GPMF), 278 to 395 (RPLT…KPYF), 396 to 509 (TKST…SPTF), 510 to 616 (SNIS…PPRF), 617 to 717 (PQLM…GPVF), 719 to 819 (MFLP…SPVF), 820 to 926 (TNAS…SPVF), 927 to 1035 (SKTL…IPRF), 1037 to 1144 (QDEY…APVF), and 1145 to 1259 (TKKM…PPTL). A helical transmembrane segment spans residues 1377-1397 (LLALAVIIILCCMPAILIVMV). Residues 1398–1899 (SYRQRQAECA…KRFPSQSTAL (502 aa)) are Cytoplasmic-facing. 3 disordered regions span residues 1668 to 1687 (SPCL…VVEP), 1700 to 1721 (HDYP…SFRI), and 1734 to 1820 (TKGE…RREL). Composition is skewed to pro residues over residues 1706-1717 (LSPPPTRKPTPP) and 1743-1773 (PDPP…PPTL). Over residues 1774-1791 (PLASVPSSSSLPSTQHLS) the composition is skewed to low complexity. Over residues 1804–1814 (AVPPPAAVPEP) the composition is skewed to pro residues.

In terms of tissue distribution, in the utricle, localizes to the distal region of the kinocilium and near the tips of the stereocilia.

It is found in the cell membrane. Its function is as follows. Calcium-dependent cell-adhesion protein. Required for inner ear neuroepithelial cell elaboration and cochlear function. Probably involved in the maintenance of normal retinal function. This is Protocadherin-15 (Pcdh15) from Gallus gallus (Chicken).